We begin with the raw amino-acid sequence, 435 residues long: Proline--tRNA ligase (435 aa).

This sequence belongs to the class-II aminoacyl-tRNA synthetase family. ProS type 2 subfamily. In terms of assembly, homodimer.

The protein resides in the cytoplasm. It catalyses the reaction tRNA(Pro) + L-proline + ATP = L-prolyl-tRNA(Pro) + AMP + diphosphate. Its function is as follows. Catalyzes the attachment of proline to tRNA(Pro) in a two-step reaction: proline is first activated by ATP to form Pro-AMP and then transferred to the acceptor end of tRNA(Pro). In Rhodospirillum rubrum (strain ATCC 11170 / ATH 1.1.1 / DSM 467 / LMG 4362 / NCIMB 8255 / S1), this protein is Proline--tRNA ligase.